We begin with the raw amino-acid sequence, 439 residues long: uncharacterized protein (439 aa).

28–35 (GRRRIGKT) serves as a coordination point for ATP.

This is an uncharacterized protein from Methanocaldococcus jannaschii (strain ATCC 43067 / DSM 2661 / JAL-1 / JCM 10045 / NBRC 100440) (Methanococcus jannaschii).